A 178-amino-acid polypeptide reads, in one-letter code: GPI mannosyltransferase 2 subunit C167.09 (178 aa).

Residues 1–20 (MREFRLIFVLLFFLPSFAIA) form the signal peptide. Topologically, residues 21 to 152 (NTEIINVETG…LGFLPKSVLP (132 aa)) are lumenal. Residues Asn48, Asn49, Asn106, Asn115, and Asn122 are each glycosylated (N-linked (GlcNAc...) asparagine). The helical transmembrane segment at 153 to 173 (IVGFVFVIILIALICMTNLFI) threads the bilayer. Residues 174 to 178 (KHKRD) are Cytoplasmic-facing.

As to quaternary structure, part of the GPI mannosyltransferase 2 complex composed of gpi18 and C167.09.

It is found in the endoplasmic reticulum membrane. It functions in the pathway glycolipid biosynthesis; glycosylphosphatidylinositol-anchor biosynthesis. In terms of biological role, essential component of the GPI mannosyltransferase 2 complex. Responsible for the transfer of the second mannose to the glycosylphosphatidylinositol during GPI precursor assembly. This is GPI mannosyltransferase 2 subunit C167.09 from Schizosaccharomyces pombe (strain 972 / ATCC 24843) (Fission yeast).